A 388-amino-acid chain; its full sequence is MEGTPAANWSVELDLGSGVPPGEEGNRTAGPPQRNEALARVEVAVLCLILFLALSGNACVLLALRTTRHKHSRLFFFMKHLSIADLVVAVFQVLPQLLWDITFRFYGPDLLCRLVKYLQVVGMFASTYLLLLMSLDRCLAICQPLRSLRRRTDRLAVLGTWLGCLVASAPQVHIFSLREVADGVFDCWAVFIQPWGPKAYVTWITLAVYIVPVIVLAACYGLISFKIWQNLRLKTAAAAAAAEGNDAAGGAGRAALARVSSVKLISKAKIRTVKMTFIIVLAFIVCWTPFFFVQMWSVWDVNAPKEASAFIIAMLLASLNSCCNPWIYMLFTGHLFHELVQRFFCCSARYLKGSRPGETSVSKKSNSSTFVLSRRSSSQRSCSQPSSA.

Residues 1 to 32 (MEGTPAANWSVELDLGSGVPPGEEGNRTAGPP) are disordered. The Extracellular segment spans residues 1 to 38 (MEGTPAANWSVELDLGSGVPPGEEGNRTAGPPQRNEAL). N-linked (GlcNAc...) asparagine glycosylation is found at Asn8 and Asn26. The helical transmembrane segment at 39–63 (ARVEVAVLCLILFLALSGNACVLLA) threads the bilayer. The Cytoplasmic portion of the chain corresponds to 64-74 (LRTTRHKHSRL). Residues 75-97 (FFFMKHLSIADLVVAVFQVLPQL) form a helical membrane-spanning segment. Over 98 to 113 (LWDITFRFYGPDLLCR) the chain is Extracellular. A disulfide bridge connects residues Cys112 and Cys187. Residues 114-135 (LVKYLQVVGMFASTYLLLLMSL) traverse the membrane as a helical segment. Over 136-154 (DRCLAICQPLRSLRRRTDR) the chain is Cytoplasmic. The chain crosses the membrane as a helical span at residues 155–175 (LAVLGTWLGCLVASAPQVHIF). The Extracellular portion of the chain corresponds to 176–202 (SLREVADGVFDCWAVFIQPWGPKAYVT). A helical membrane pass occupies residues 203 to 225 (WITLAVYIVPVIVLAACYGLISF). Residues 226-274 (KIWQNLRLKTAAAAAAAEGNDAAGGAGRAALARVSSVKLISKAKIRTVK) are Cytoplasmic-facing. A helical transmembrane segment spans residues 275–293 (MTFIIVLAFIVCWTPFFFV). The Extracellular portion of the chain corresponds to 294-308 (QMWSVWDVNAPKEAS). The chain crosses the membrane as a helical span at residues 309–331 (AFIIAMLLASLNSCCNPWIYMLF). The Cytoplasmic segment spans residues 332 to 388 (TGHLFHELVQRFFCCSARYLKGSRPGETSVSKKSNSSTFVLSRRSSSQRSCSQPSSA). The disordered stretch occupies residues 354 to 388 (SRPGETSVSKKSNSSTFVLSRRSSSQRSCSQPSSA). Phosphoserine occurs at positions 365 and 367. Over residues 365 to 388 (SNSSTFVLSRRSSSQRSCSQPSSA) the composition is skewed to low complexity.

This sequence belongs to the G-protein coupled receptor 1 family. Vasopressin/oxytocin receptor subfamily.

It localises to the cell membrane. Functionally, receptor for oxytocin. The activity of this receptor is mediated by G proteins which activate a phosphatidylinositol-calcium second messenger system. The sequence is that of Oxytocin receptor (Oxtr) from Rattus norvegicus (Rat).